A 307-amino-acid chain; its full sequence is tRNA pseudouridine synthase B (307 aa).

Residue D38 is the Nucleophile of the active site.

It belongs to the pseudouridine synthase TruB family. Type 1 subfamily.

It catalyses the reaction uridine(55) in tRNA = pseudouridine(55) in tRNA. In terms of biological role, responsible for synthesis of pseudouridine from uracil-55 in the psi GC loop of transfer RNAs. The polypeptide is tRNA pseudouridine synthase B (Lachnoclostridium phytofermentans (strain ATCC 700394 / DSM 18823 / ISDg) (Clostridium phytofermentans)).